The following is a 360-amino-acid chain: Ankyrin repeat domain-containing protein 2 (360 aa).

Residues 5-120 are may mediate interaction with PML, p53/TP53 and YBX1; sequence PSWAGVGALA…GIQNLIELRK (116 aa). Residue Ser-99 is modified to Phosphoserine; by PKB/AKT2. The interval 126-147 is disordered; the sequence is KRDALAASHEPPPEPEEITGPV. The segment covering 138–147 has biased composition (acidic residues); that stretch reads PEPEEITGPV. 5 ANK repeats span residues 147–176, 180–209, 213–242, 246–275, and 279–308; these read VDEE…SADT, FRRT…TVDF, LDCT…DTNV, LLST…EINA, and EGDT…DMMT. Positions 330–342 are enriched in basic and acidic residues; sequence ALEHPEPGAEHNG. Residues 330-360 form a disordered region; sequence ALEHPEPGAEHNGLEGPNDSGRETPQPVPAQ.

As to quaternary structure, interacts with ID3; both proteins cooperate in myoblast differentiation. Interacts with TTN/titin. Interacts (via ANK repeats) with TCAP; the interaction is direct. Interacts with TJP1 (via PDZ domains). Interacts with PML; the interaction is direct. Interacts with p53/TP53. Interacts with YBX1. Interacts with AKT2. Post-translationally, phosphorylation at Ser-99 by PKB/AKT2 in response to oxidative stress induces translocation to the nucleus and negatively regulates myoblast differentiation. In terms of tissue distribution, mostly expressed in skeletal and cardiac muscles. Found in slow fibers. Also expressed in kidney, but to a lower extent (at protein level).

Its subcellular location is the cytoplasm. It localises to the myofibril. The protein resides in the sarcomere. The protein localises to the i band. It is found in the cytosol. Its subcellular location is the nucleus. It localises to the PML body. Functions as a negative regulator of myocyte differentiation. May interact with both sarcoplasmic structural proteins and nuclear proteins to regulate gene expression during muscle development and in response to muscle stress. In Homo sapiens (Human), this protein is Ankyrin repeat domain-containing protein 2 (ANKRD2).